A 784-amino-acid chain; its full sequence is Cation/H(+) antiporter 26 (784 aa).

A run of 11 helical transmembrane segments spans residues 38-58 (PLLL…QALL), 61-81 (LANV…PSAL), 97-117 (YFII…ISTA), 130-150 (LAII…AIAC), 201-221 (LALS…LLLI), 240-260 (FTKV…FNWI), 286-306 (TFLS…LGLV), 321-341 (IGSF…GNKV), 351-371 (IISL…SIVL), 376-396 (FQVP…QGIY), and 413-433 (EAFG…TAIV).

This sequence belongs to the monovalent cation:proton antiporter 2 (CPA2) transporter (TC 2.A.37) family. CHX (TC 2.A.37.4) subfamily. As to expression, expressed in pollen.

Its subcellular location is the membrane. Its function is as follows. May operate as a cation/H(+) antiporter. The chain is Cation/H(+) antiporter 26 (CHX26) from Arabidopsis thaliana (Mouse-ear cress).